The primary structure comprises 648 residues: Biosynthetic arginine decarboxylase (648 aa).

Lys109 is subject to N6-(pyridoxal phosphate)lysine. Position 291–301 (291–301 (IDVGGGLGIDF)) interacts with substrate.

It belongs to the Orn/Lys/Arg decarboxylase class-II family. SpeA subfamily. It depends on Mg(2+) as a cofactor. Pyridoxal 5'-phosphate is required as a cofactor.

It carries out the reaction L-arginine + H(+) = agmatine + CO2. Its pathway is amine and polyamine biosynthesis; agmatine biosynthesis; agmatine from L-arginine: step 1/1. In terms of biological role, catalyzes the biosynthesis of agmatine from arginine. This is Biosynthetic arginine decarboxylase from Prochlorococcus marinus (strain MIT 9215).